The primary structure comprises 149 residues: Dehydrin Rab15 (149 aa).

Residues 1–149 (MEFQGQHDNP…KIKEKLPGQH (149 aa)) form a disordered region. A compositionally biased stretch (basic and acidic residues) spans 78–93 (KEKIKEKLPGGHKDNQ). The span at 100 to 117 (TGTGGAYGPGTGTGGAYG) shows a compositional bias: gly residues. The span at 132–149 (GEKKGIMDKIKEKLPGQH) shows a compositional bias: basic and acidic residues.

Belongs to the plant dehydrin family.

This Triticum aestivum (Wheat) protein is Dehydrin Rab15 (RAB15).